Reading from the N-terminus, the 316-residue chain is Pantothenate kinase (316 aa).

95 to 102 (GSVAVGKS) contributes to the ATP binding site.

The protein belongs to the prokaryotic pantothenate kinase family.

The protein localises to the cytoplasm. It catalyses the reaction (R)-pantothenate + ATP = (R)-4'-phosphopantothenate + ADP + H(+). The protein operates within cofactor biosynthesis; coenzyme A biosynthesis; CoA from (R)-pantothenate: step 1/5. In Serratia proteamaculans (strain 568), this protein is Pantothenate kinase.